The primary structure comprises 157 residues: Cyclic pyranopterin monophosphate synthase (157 aa).

Substrate is bound by residues 74-76 and 112-113; these read MCH and ME. The active site involves D127.

Belongs to the MoaC family. In terms of assembly, homohexamer; trimer of dimers.

The enzyme catalyses (8S)-3',8-cyclo-7,8-dihydroguanosine 5'-triphosphate = cyclic pyranopterin phosphate + diphosphate. It participates in cofactor biosynthesis; molybdopterin biosynthesis. Functionally, catalyzes the conversion of (8S)-3',8-cyclo-7,8-dihydroguanosine 5'-triphosphate to cyclic pyranopterin monophosphate (cPMP). The sequence is that of Cyclic pyranopterin monophosphate synthase from Campylobacter jejuni subsp. jejuni serotype O:23/36 (strain 81-176).